We begin with the raw amino-acid sequence, 863 residues long: MSGEVAQDQPPIRSPRSTRRSQEIVNSAITVQSSAKLDTDKSGAQADKVSSKKSRTTSPELLEDQVVSNESKTSKKKETKASQLFSKRKEIFSTRDLRFLKLRIASPTRIRSWGTHKLPNGKQVGRITKAETINYRTYKPEMDGLFCERAFGPVKDWECHCGRTKGQERNKDGIPIPRVCTHCGVELRDSKIRRHRMGYIELVYPVVHIWYLKSIPSYLGVLLDKPRRELEAITYCTNYASSQDSMAFSASLLFPTTGSFRQSKDSMKWEYLNWFHIETYLGLKEATNSALVHYGKRIQDSPIEVGLPLSEDPRQFSIGAQAIACQLRALNLRSVSRLLSRDLYIIDARETRFGALEEEEMKRRSKLIRRLQLIHYFMQTKAQPEWMVIKALPVLPPDLRPIVQLEGGRFATTDLNDLYRRVLNRNNRFMKLHKMVAPETLIRSEKRLLQEAVDGLFDNGKRGKPVLNSSNRPLKSLADALKGKQGRFRQNLLGKRVDYSGRSVIVVGPKLRLHQCGLPKEMALELFQPLVIRLLLKRKVAPNIRYAKKLMHHAVARGPENPTIIDAVVWDTLAAVVEGYPILLNRAPTLHRLGIQAFEPVLINGRAIQLHPLVCTGFNADFDGDQMGVHIPLSAEARAEAKLLMLASHNLLSPATGQPIVVPSQDMVLGWYYLTTENPWIESTEGLYFSGLSDVEHAYHQGQIHLHSIIWVRWGGESEGSLGDEFEDNPLEIRIDANGHSWHIYSQYQLRYDDEGDLISQFIRTTTGRVVFNQLVHRHIEWSLHDQVMEEIETEFPESVLPPDVMRCLVRLYSAHAIGERPAMLGLASPGTPSPGRACAYPPRDDYADPNQIKEYLNRIGHW.

A disordered region spans residues 1–83 (MSGEVAQDQP…SKKKETKASQ (83 aa)). The span at 23–36 (EIVNSAITVQSSAK) shows a compositional bias: polar residues. Positions 159, 161, 180, and 183 each coordinate Zn(2+). Residues Asp-621, Asp-623, and Asp-625 each contribute to the Mg(2+) site.

It belongs to the RNA polymerase beta' chain family. RpoC1 subfamily. In plastids the minimal PEP RNA polymerase catalytic core is composed of four subunits: alpha, beta, beta', and beta''. When a (nuclear-encoded) sigma factor is associated with the core the holoenzyme is formed, which can initiate transcription. Mg(2+) serves as cofactor. It depends on Zn(2+) as a cofactor.

The protein resides in the plastid. Its subcellular location is the chloroplast. It catalyses the reaction RNA(n) + a ribonucleoside 5'-triphosphate = RNA(n+1) + diphosphate. DNA-dependent RNA polymerase catalyzes the transcription of DNA into RNA using the four ribonucleoside triphosphates as substrates. In Nephroselmis olivacea (Green alga), this protein is DNA-directed RNA polymerase subunit beta'.